We begin with the raw amino-acid sequence, 164 residues long: Pathogenesis-related protein PRB1-2 (164 aa).

A signal peptide spans 1–24; it reads MQTPKLAILLALAMAAAMVNLSQA. A Pyrrolidone carboxylic acid modification is found at Gln-25. An SCP domain is found at 34–152; that stretch reads PHNAARSAVG…NRGVFITCNY (119 aa). Cystine bridges form between Cys-68–Cys-140, Cys-113–Cys-119, and Cys-135–Cys-150.

Belongs to the CRISP family.

Its function is as follows. Probably involved in the defense reaction of plants against pathogens. This is Pathogenesis-related protein PRB1-2 from Hordeum vulgare (Barley).